A 398-amino-acid polypeptide reads, in one-letter code: MAKRVHLFDWHKEHAKKIEEFAGWEMPIWYSSIKEEHLAVRNAVGLFDVSHMGEIYFRGKDALKFLQYVTTNDISKPPAISGIYTLVLNERGAIKDETLIFNMGNNEYLMICDSDAFEKLYAWFTYLKKTIEQFTKLDLEIELKTYDIAMFAVQGPKARDLARDLFGIDINEMWWFQARWVELDGIKMLLSRSGYTGENGFEVYIEDANPYHPDESKRGEPEKALHVWERILEEGKKYGIKPAGLGARDTLRLEAGYTLYGNETKELQLLSTDIDEVTPLQANLEFAIYWDKDFIGKDALLKQKERGLGRKLVHFKMVDKGIPREGYKVYANGELIGEVTSGTLSPLLNVGIGIAFVKEEYAKPGIEIEVEIRGARKKAITVTPPFYDPKKYGLFRET.

The protein belongs to the GcvT family. As to quaternary structure, the glycine cleavage system is composed of four proteins: P, T, L and H.

The enzyme catalyses N(6)-[(R)-S(8)-aminomethyldihydrolipoyl]-L-lysyl-[protein] + (6S)-5,6,7,8-tetrahydrofolate = N(6)-[(R)-dihydrolipoyl]-L-lysyl-[protein] + (6R)-5,10-methylene-5,6,7,8-tetrahydrofolate + NH4(+). Functionally, the glycine cleavage system catalyzes the degradation of glycine. The polypeptide is Probable aminomethyltransferase (Pyrococcus abyssi (strain GE5 / Orsay)).